We begin with the raw amino-acid sequence, 146 residues long: HTH-type transcriptional regulator NsrR (146 aa).

The HTH rrf2-type domain maps to 2-133; that stretch reads KLTNYTDYSL…DKYTLRDLVK (132 aa). The segment at residues 28–51 is a DNA-binding region (H-T-H motif); sequence IKQIAETYSISKNHLMKVIYRLGQ. Positions 92, 100, and 106 each coordinate [2Fe-2S] cluster.

Requires [2Fe-2S] cluster as cofactor.

Its function is as follows. Nitric oxide-responsive transcriptional regulator. It represses the expression of flavohemoprotein hmp and the nitrite reductase nasD. Probably plays a role in the up-regulation of the resDE regulon in the presence of nitric oxide. This Bacillus subtilis (strain 168) protein is HTH-type transcriptional regulator NsrR (nsrR).